Here is a 1288-residue protein sequence, read N- to C-terminus: Symplekin (1288 aa).

The interaction with HSF1 stretch occupies residues 1 to 124 (MASSSGDSVT…NMLLRDENVN (124 aa)). S13 bears the Phosphoserine mark. HEAT repeat units lie at residues 31–64 (TTSERVVDLLNQAALITNDSKITVLKQVQELIIN), 67–101 (PTLLDNFLDEIIAFQADKSIEVRKFVIGFIEEACK), 104–146 (IELL…WMVK), 153–192 (LQEACWDMVSSMAGEIILLLDSDNDGIRTHAIKFVEGLIV), and 227–266 (VLWEEGKAAVEQLLKFMVHPAISSINLTTALGSLANIARQ). The segment at 335–392 (IARNMPSSKDSRKRPRDDTDSTLKKMKLEPNLGEDDEDKDLEPGPSGTSKASAQISGQ) is disordered. A Nuclear localization signal motif is present at residues 345–360 (SRKRPRDDTDSTLKKM). Positions 349 to 362 (PRDDTDSTLKKMKL) are enriched in basic and acidic residues. K361 participates in a covalent cross-link: Glycyl lysine isopeptide (Lys-Gly) (interchain with G-Cter in SUMO1); alternate. K361 is covalently cross-linked (Glycyl lysine isopeptide (Lys-Gly) (interchain with G-Cter in SUMO2); alternate). The segment covering 380–392 (SGTSKASAQISGQ) has biased composition (polar residues). Residue K483 forms a Glycyl lysine isopeptide (Lys-Gly) (interchain with G-Cter in SUMO2) linkage. The residue at position 494 (S494) is a Phosphoserine. Disordered stretches follow at residues 1130–1151 (PAPAPAPAPAPAPAPAPRPPQD) and 1163–1288 (LKRQ…KGNS). Positions 1131-1149 (APAPAPAPAPAPAPAPRPP) are enriched in pro residues. Residues 1163–1173 (LKRQLEEEQKQ) show a composition bias toward basic and acidic residues. Residues S1238 and S1239 each carry the phosphoserine modification. A Glycyl lysine isopeptide (Lys-Gly) (interchain with G-Cter in SUMO1) cross-link involves residue K1256. A Phosphoserine modification is found at S1260. Positions 1267-1288 (AVEEALKTSSPETREPESKGNS) are enriched in basic and acidic residues. At T1274 the chain carries Phosphothreonine. The residue at position 1276 (S1276) is a Phosphoserine.

Belongs to the Symplekin family. Found in a heat-sensitive complex at least composed of several cleavage and polyadenylation specific and cleavage stimulation factors. Interacts with CPSF2, CPSF3 and CSTF2. Interacts (via N-terminus) with HSF1; this interaction is direct and occurs upon heat shock. Interacts with SSU72.

It localises to the cytoplasm. The protein localises to the cytoskeleton. It is found in the cell junction. The protein resides in the tight junction. Its subcellular location is the cell membrane. It localises to the nucleus. The protein localises to the nucleoplasm. Scaffold protein that functions as a component of a multimolecular complex involved in histone mRNA 3'-end processing. Specific component of the tight junction (TJ) plaque, but might not be an exclusively junctional component. May have a house-keeping rule. Is involved in pre-mRNA polyadenylation. Enhances SSU72 phosphatase activity. In Mus musculus (Mouse), this protein is Symplekin (Sympk).